Here is a 1694-residue protein sequence, read N- to C-terminus: Homeobox-DDT domain protein RLT2 (1694 aa).

The disordered stretch occupies residues 1-24; sequence MEGGSEKTTPEGCGGESKSKRKMK. Positions 17–76 form a DNA-binding region, homeobox; that stretch reads SKSKRKMKTAAQLEVLENTYSAEPYPSEAIRADLSVKLNLSDRQLQMWFCHRRLKERKST. The region spanning 514-573 is the DDT domain; the sequence is DENVANLLMVWRFLITFADVLGLWPFTLDEFAQAFHDYDPRLMGEIHIVLLKTIIKDIEG. Positions 696–765 constitute an HTH HARE-type domain; it reads GTVKFAAFHV…APSTYCVRAS (70 aa). Over residues 795–816 the composition is skewed to acidic residues; that stretch reads EDVDDAERDEDSESDVGEDPEV. Disordered stretches follow at residues 795 to 822, 1450 to 1541, 1555 to 1639, and 1655 to 1674; these read EDVD…NLKK, KQEE…ICNE, AKTS…MNMK, and EDSY…AATR. Phosphoserine is present on residues Ser-806 and Ser-808. Residues 1459–1470 are compositionally biased toward gly residues; sequence GLGGVSSSGRGG. 2 stretches are compositionally biased toward basic residues: residues 1471–1485 and 1515–1531; these read RPPR…RGNG and GGRK…RKRP. Composition is skewed to acidic residues over residues 1561–1578, 1589–1605, and 1624–1635; these read DNDD…DDGE, EDYD…DFDG, and DEYEEEEEEEED.

Interacts with CHR11. Interacts (via the DDT domain) with CHR11 (via C-terminus). Highly expressed in growing tissues such as inflorescence and flower meristems, young leaves and floral organs. Expressed in roots, rosette and cauline leaves, stems, flowers, inflorescences and siliques.

The protein resides in the nucleus. In terms of biological role, transcriptional regulator required for the maintenance of the plant vegetative phase. In association with CHR11 or CHR17 may prevent the early activation of the vegetative-to-reproductive transition by regulating key genes that contribute to flower timing, such as FT, SEP1, SEP3, AGL8/FUL, SOC1 and FLC. Involved in the transcriptional regulation of seed-specific gene expression. The sequence is that of Homeobox-DDT domain protein RLT2 from Arabidopsis thaliana (Mouse-ear cress).